The following is a 125-amino-acid chain: Testis-specific protein LINC02914 (125 aa).

Residues M1 to A12 are compositionally biased toward basic and acidic residues. The interval M1–Q45 is disordered.

In terms of tissue distribution, expressed in testes and ejaculated spermatozoa (at protein level).

Its subcellular location is the cytoplasm. It is found in the nucleus. It localises to the cell projection. The protein resides in the cilium. The protein localises to the flagellum. Functionally, may play a role in the flagellum biology. The polypeptide is Testis-specific protein LINC02914 (Homo sapiens (Human)).